The primary structure comprises 74 residues: Conotoxin Vi15a (74 aa).

Positions 1-19 (MMPVILLLLLSLAIRCADG) are cleaved as a signal peptide. The propeptide occupies 20–43 (KAVQGDSDPSASLLTGDKNHDLPV). W72 carries the tryptophan amide modification.

Contains four disulfide bonds. As to expression, expressed by the venom duct.

The protein resides in the secreted. The chain is Conotoxin Vi15a from Conus virgo (Virgin cone).